Consider the following 30-residue polypeptide: V-type proton ATPase catalytic subunit A isoform 1 (30 aa).

This sequence belongs to the ATPase alpha/beta chains family. V-ATPase is a heteromultimeric enzyme composed of a peripheral catalytic V1 complex (main components: subunits A, B, C, D, E, and F) attached to an integral membrane V0 proton pore complex (main component: the proteolipid protein).

The catalysed reaction is ATP + H2O + 4 H(+)(in) = ADP + phosphate + 5 H(+)(out). In terms of biological role, catalytic subunit of the peripheral V1 complex of vacuolar ATPase. V-ATPase vacuolar ATPase is responsible for acidifying a variety of intracellular compartments in eukaryotic cells. This is V-type proton ATPase catalytic subunit A isoform 1 from Psilotum nudum (Whisk fern).